The following is a 796-amino-acid chain: Putative aconitate hydratase, mitochondrial (796 aa).

The N-terminal 28 residues, 1-28, are a transit peptide targeting the mitochondrion; it reads MLRQIVSQRSAARRQLIDQLAPCLRRGL. Substrate is bound by residues glutamine 108 and 201-203; that span reads DSH. [4Fe-4S] cluster contacts are provided by cysteine 399, cysteine 462, and cysteine 465. Residues arginine 489 and arginine 494 each contribute to the substrate site. Positions 540–569 are disordered; it reads EPPTGQDLPSKGFEAGNPAFQPSAPVPDSS. Substrate is bound at residue 685–686; the sequence is AR.

The protein belongs to the aconitase/IPM isomerase family.

Its subcellular location is the mitochondrion. In terms of biological role, has no detectable activity towards cis-acontiate or cis-homoaconitate. This Emericella nidulans (strain FGSC A4 / ATCC 38163 / CBS 112.46 / NRRL 194 / M139) (Aspergillus nidulans) protein is Putative aconitate hydratase, mitochondrial (acoB).